Here is an 878-residue protein sequence, read N- to C-terminus: Phosphoenolpyruvate carboxylase (878 aa).

Catalysis depends on residues His-138 and Lys-545.

This sequence belongs to the PEPCase type 1 family. Requires Mg(2+) as cofactor.

It carries out the reaction oxaloacetate + phosphate = phosphoenolpyruvate + hydrogencarbonate. Functionally, forms oxaloacetate, a four-carbon dicarboxylic acid source for the tricarboxylic acid cycle. This Shewanella sediminis (strain HAW-EB3) protein is Phosphoenolpyruvate carboxylase.